The sequence spans 162 residues: 18.5 kDa class IV heat shock protein (162 aa).

Positions Thr-53–Asn-149 constitute a sHSP domain.

This sequence belongs to the small heat shock protein (HSP20) family. May form oligomeric structures.

It localises to the cytoplasm. This Arabidopsis thaliana (Mouse-ear cress) protein is 18.5 kDa class IV heat shock protein (HSP18.5).